Consider the following 29-residue polypeptide: uncharacterized protein (29 aa).

Residues 7-27 (FSLVTTIIVLGLIVAVGLTAA) traverse the membrane as a helical segment.

The protein resides in the cell inner membrane. This is an uncharacterized protein from Escherichia coli O6:K15:H31 (strain 536 / UPEC).